Reading from the N-terminus, the 91-residue chain is Putative defensin-like protein 145 (91 aa).

An N-terminal signal peptide occupies residues 1 to 26 (MNKNIIFSFTVLTLFVIFVQVTGVIG). 2 N-linked (GlcNAc...) asparagine glycosylation sites follow: asparagine 35 and asparagine 68. Intrachain disulfides connect cysteine 39/cysteine 84, cysteine 52/cysteine 74, cysteine 57/cysteine 78, and cysteine 61/cysteine 80.

This sequence belongs to the DEFL family.

The protein resides in the secreted. The polypeptide is Putative defensin-like protein 145 (LCR2) (Arabidopsis thaliana (Mouse-ear cress)).